The chain runs to 968 residues: MPFTLGQRWISDTESELGLGTVVAMDARTVTLLFPSTGENRLYARSDSPVTRVMFNPGDTITSHEGWQLHIDEVKEENGLLAYVGTRLDTEETNVTLREVLLDSKLVFSKPQDRLFAGQIDRMDRFALRYRARKFQSEQYRMPYSGLRGQRTNLIPHQLNIAHDVGRRHAPRVLLADEVGLGKTIEAGMILHQQLLSGAAERVLIIVPETLQHQWLVEMLRRFNLRFALFDDERYTEAQHDAYNPFETEQLVICSLDFARRNKQRLEHLCDAEWDLLVVDEAHHLVWSIDAPSREYMAIEQLAERVPGVLLLTATPEQLGMESHFARLRLLDPNRFHDFAQFVEEQKNYRPVADAVAMLLAGNKLSNDELNRLGDLIGEQDIEPLLQAANSDRDDAQAARQELVSMLMDRHGTSRVLFRNTRNGVKGFPKRELHTVKLPLPTQYQTAIKVSGIMGARKSAEDRARDMLYPEQIYQEFEGDTGTWWNFDPRVEWLMGYLTSHRSQKVLVICAKATTALQLEQVLREREGIRAAVFHEGMSIIERDRAAAWFAEEDTGAQVLLCSEIGSEGRNFQFASNLVMFDLPFNPDLLEQRIGRLDRIGQAHDIQIHVPYLEKTAQSVLVRWYHEGLDAFEHTCPTGRAIYDSAYASLINYLGAPEETDGFDDLITSCREQHEALKAQLEQGRDRLLEIHSNGGEKAQQLAQSIEEQDDDTSLIAFAMNLFDIIGINQDDRGDNLIVLTPSDHMLVPDFPGLPEDGCTITFERDVALSREDAQFITWEHPLIRNGLDLILSGDTGSSTISLLKNKALPVGTLLVELIYVVEAQAPKQLQLNRFLPPTPVRMLLDKNGNNLAAQVEFETFNRQLSAVNRHTGSKLVNAVQQDVHAILQLGETQIEKSARALIDNARREADEKLSGELSRLEALRAVNPNIRDDELAAIDSNRQQVLESLNQASWRLDALRLIVVTHQ.

The Helicase ATP-binding domain occupies 164–334; that stretch reads DVGRRHAPRV…FARLRLLDPN (171 aa). 177 to 184 contacts ATP; the sequence is DEVGLGKT. The DEAH box signature appears at 280–283; that stretch reads DEAH. Residues 490–644 form the Helicase C-terminal domain; sequence RVEWLMGYLT…TCPTGRAIYD (155 aa).

Belongs to the SNF2/RAD54 helicase family. RapA subfamily. As to quaternary structure, interacts with the RNAP. Has a higher affinity for the core RNAP than for the holoenzyme. Its ATPase activity is stimulated by binding to RNAP.

In terms of biological role, transcription regulator that activates transcription by stimulating RNA polymerase (RNAP) recycling in case of stress conditions such as supercoiled DNA or high salt concentrations. Probably acts by releasing the RNAP, when it is trapped or immobilized on tightly supercoiled DNA. Does not activate transcription on linear DNA. Probably not involved in DNA repair. In Salmonella arizonae (strain ATCC BAA-731 / CDC346-86 / RSK2980), this protein is RNA polymerase-associated protein RapA.